Consider the following 473-residue polypeptide: High-affinity proline transporter PutP (473 aa).

12 helical membrane-spanning segments follow: residues 32 to 52 (LSAGAADMSGWLLMGLPGAMF), 56 to 76 (LSGAWIVIGLCLGAWANWLYV), 114 to 134 (IVILVFFTFYVSSGMVSGGVL), 146 to 166 (GLWIVTGVVVAYTLFGGFLAV), 171 to 191 (FVQGIIMFAALILVPIVTFFH), 218 to 238 (VLGIISLFAWGLGYFGQPHII), 256 to 276 (IGMGWMILSAVGAVLTGLGGI), 299 to 319 (ILFHPIITGFLISAILAAIMS), 350 to 370 (LVFLGRLAVLAVSIVALVLAW), 376 to 396 (ILGLVSYAWAGFGASFGPVVL), 408 to 428 (GALAGMIVGAATVIIWANAGL), and 431 to 451 (FLYEMIPGFAASLLSVFFVSI).

This sequence belongs to the sodium:solute symporter (SSF) (TC 2.A.21) family.

The protein localises to the cell membrane. The catalysed reaction is L-proline(in) + Na(+)(in) = L-proline(out) + Na(+)(out). Functionally, catalyzes the high-affinity uptake of extracellular proline. Important for the use of proline as a sole carbon and energy source or a sole nitrogen source. The sequence is that of High-affinity proline transporter PutP from Bacillus subtilis (strain 168).